Consider the following 452-residue polypeptide: Phosphoglucosamine mutase (452 aa).

Ser-104 serves as the catalytic Phosphoserine intermediate. Residues Ser-104, Asp-246, Asp-248, and Asp-250 each contribute to the Mg(2+) site. Position 104 is a phosphoserine (Ser-104).

Belongs to the phosphohexose mutase family. The cofactor is Mg(2+). In terms of processing, activated by phosphorylation.

The catalysed reaction is alpha-D-glucosamine 1-phosphate = D-glucosamine 6-phosphate. Catalyzes the conversion of glucosamine-6-phosphate to glucosamine-1-phosphate. This is Phosphoglucosamine mutase from Streptomyces avermitilis (strain ATCC 31267 / DSM 46492 / JCM 5070 / NBRC 14893 / NCIMB 12804 / NRRL 8165 / MA-4680).